A 410-amino-acid polypeptide reads, in one-letter code: Platelet-activating factor acetylhydrolase IB subunit alpha (410 aa).

Positions 1-38 (MVLSQRQRDELNRAIADYLRSNGYEEAYSVFKKEAELD) are required for self-association and interaction with PAFAH1B2 and PAFAH1B3. The interaction with NDE1 stretch occupies residues 1–66 (MVLSQRQRDE…SVIRLQKKVM (66 aa)). An interaction with NDEL1 region spans residues 1–102 (MVLSQRQRDE…EWIPRPPEKY (102 aa)). A LisH domain is found at 7–39 (QRDELNRAIADYLRSNGYEEAYSVFKKEAELDM). An N6-acetyllysine modification is found at Lys-53. Residues 56-82 (TSVIRLQKKVMELESKLNEAKEEFTSG) adopt a coiled-coil conformation. The tract at residues 83-410 (GPLGQKRDPK…DQTVKVWECR (328 aa)) is interaction with dynein and dynactin. WD repeat units lie at residues 106 to 147 (GHRS…RTLK), 148 to 187 (GHTD…CIRT), 190 to 229 (GHDH…CVKT), 232 to 271 (GHRE…CKAE), 274 to 333 (EHEH…CLMT), 336 to 377 (GHDN…KTLN), and 379 to 410 (HEHF…WECR). Ser-109 bears the Phosphoserine mark. Positions 367–409 (YKNKRCMKTLNAHEHFVTSLDFHKTAPYVVTGFVDQTVKVWEC) are interaction with DCX. Positions 388–410 (FHKTAPYVVTGFVDQTVKVWECR) are interaction with NDEL1.

Belongs to the WD repeat LIS1/nudF family. As to quaternary structure, can self-associate. Component of the cytosolic PAF-AH (I) heterotetrameric enzyme, which is composed of PAFAH1B1 (beta), PAFAH1B2 (alpha2) and PAFAH1B3 (alpha1) subunits. The catalytic activity of the enzyme resides in the alpha1 (PAFAH1B3) and alpha2 (PAFAH1B2) subunits, whereas the beta subunit (PAFAH1B1) has regulatory activity. Trimer formation is not essential for the catalytic activity. Interacts with the catalytic dimer of PAF-AH (I) heterotetrameric enzyme: interacts with PAFAH1B2 homodimer (alpha2/alpha2 homodimer), PAFAH1B3 homodimer (alpha1/alpha1 homodimer) and PAFAH1B2-PAFAH1B3 heterodimer (alpha2/alpha1 heterodimer). Interacts with DCX, dynein, dynactin, IQGAP1, KATNB1, NDE1, NDEL1, NUDC and RSN. Interacts with DISC1, and this interaction is enhanced by NDEL1. Interacts with DAB1 when DAB1 is phosphorylated in response to RELN/reelin signaling. Interacts with INTS13. Interacts with DCDC1.

It localises to the cytoplasm. Its subcellular location is the cytoskeleton. The protein resides in the microtubule organizing center. It is found in the centrosome. The protein localises to the spindle. It localises to the nucleus membrane. Its function is as follows. Regulatory subunit (beta subunit) of the cytosolic type I platelet-activating factor (PAF) acetylhydrolase (PAF-AH (I)), an enzyme that catalyzes the hydrolyze of the acetyl group at the sn-2 position of PAF and its analogs and participates in PAF inactivation. Regulates the PAF-AH (I) activity in a catalytic dimer composition-dependent manner. Positively regulates the activity of the minus-end directed microtubule motor protein dynein. May enhance dynein-mediated microtubule sliding by targeting dynein to the microtubule plus end. Required for several dynein- and microtubule-dependent processes such as the maintenance of Golgi integrity, the peripheral transport of microtubule fragments and the coupling of the nucleus and centrosome. Required during brain development for the proliferation of neuronal precursors and the migration of newly formed neurons from the ventricular/subventricular zone toward the cortical plate. Neuronal migration involves a process called nucleokinesis, whereby migrating cells extend an anterior process into which the nucleus subsequently translocates. During nucleokinesis dynein at the nuclear surface may translocate the nucleus towards the centrosome by exerting force on centrosomal microtubules. Also required for proper activation of Rho GTPases and actin polymerization at the leading edge of locomoting cerebellar neurons and postmigratory hippocampal neurons in response to calcium influx triggered via NMDA receptors. May also play a role in other forms of cell locomotion including the migration of fibroblasts during wound healing. Required for dynein recruitment to microtubule plus ends and BICD2-bound cargos. May modulate the Reelin pathway through interaction of the PAF-AH (I) catalytic dimer with VLDLR. The polypeptide is Platelet-activating factor acetylhydrolase IB subunit alpha (Pan troglodytes (Chimpanzee)).